Consider the following 307-residue polypeptide: Homoserine O-acetyltransferase (307 aa).

The Acyl-thioester intermediate role is filled by cysteine 142. 2 residues coordinate substrate: lysine 163 and serine 192. Histidine 235 (proton acceptor) is an active-site residue. Residue glutamate 237 is part of the active site. Residue arginine 249 coordinates substrate.

This sequence belongs to the MetA family.

The protein localises to the cytoplasm. The catalysed reaction is L-homoserine + acetyl-CoA = O-acetyl-L-homoserine + CoA. Its pathway is amino-acid biosynthesis; L-methionine biosynthesis via de novo pathway; O-acetyl-L-homoserine from L-homoserine: step 1/1. Functionally, transfers an acetyl group from acetyl-CoA to L-homoserine, forming acetyl-L-homoserine. In Desulfitobacterium hafniense (strain DSM 10664 / DCB-2), this protein is Homoserine O-acetyltransferase.